Reading from the N-terminus, the 206-residue chain is Small ribosomal subunit protein uS4 (206 aa).

The S4 RNA-binding domain maps to 96 to 157 (SRLDNVVYRM…KAKKQVRIQE (62 aa)).

Belongs to the universal ribosomal protein uS4 family. Part of the 30S ribosomal subunit. Contacts protein S5. The interaction surface between S4 and S5 is involved in control of translational fidelity.

One of the primary rRNA binding proteins, it binds directly to 16S rRNA where it nucleates assembly of the body of the 30S subunit. In terms of biological role, with S5 and S12 plays an important role in translational accuracy. This Neisseria gonorrhoeae (strain ATCC 700825 / FA 1090) protein is Small ribosomal subunit protein uS4.